Consider the following 469-residue polypeptide: Tubulin gamma chain (469 aa).

142–148 serves as a coordination point for GTP; the sequence is AGGTGSG.

Belongs to the tubulin family.

It is found in the cytoplasm. It localises to the cytoskeleton. The protein localises to the microtubule organizing center. Its subcellular location is the spindle pole body. Functionally, tubulin is the major constituent of microtubules. The gamma chain is found at microtubule organizing centers (MTOC) such as the spindle poles or the centrosome, suggesting that it is involved in the minus-end nucleation of microtubule assembly. The polypeptide is Tubulin gamma chain (TUB4) (Microbotryum violaceum (Anther smut fungus)).